The sequence spans 28 residues: Conotoxin Cl5.3 (28 aa).

This sequence belongs to the conotoxin T superfamily. In terms of processing, contains 2 disulfide bonds that can be either 'C1-C3, C2-C4' or 'C1-C4, C2-C3', since these disulfide connectivities have been observed for conotoxins with cysteine framework V (for examples, see AC P0DQQ7 and AC P81755). In terms of tissue distribution, expressed by the venom duct.

It localises to the secreted. This is Conotoxin Cl5.3 from Californiconus californicus (California cone).